We begin with the raw amino-acid sequence, 329 residues long: Phosphoenolpyruvate transferase (329 aa).

A 7,8-didemethyl-8-hydroxy-5-deazariboflavin-binding site is contributed by aspartate 61.

It belongs to the CofD family. Homodimer. Requires Mg(2+) as cofactor.

The enzyme catalyses enolpyruvoyl-2-diphospho-5'-guanosine + 7,8-didemethyl-8-hydroxy-5-deazariboflavin = dehydro coenzyme F420-0 + GMP + H(+). The protein operates within cofactor biosynthesis; coenzyme F420 biosynthesis. In terms of biological role, catalyzes the transfer of the phosphoenolpyruvate moiety from enoylpyruvoyl-2-diphospho-5'-guanosine (EPPG) to 7,8-didemethyl-8-hydroxy-5-deazariboflavin (FO) with the formation of dehydro coenzyme F420-0 and GMP. In Mycobacterium marinum (strain ATCC BAA-535 / M), this protein is Phosphoenolpyruvate transferase.